Consider the following 415-residue polypeptide: Serine hydroxymethyltransferase (415 aa).

(6S)-5,6,7,8-tetrahydrofolate-binding positions include L118 and 122 to 124; that span reads GHL. K227 is modified (N6-(pyridoxal phosphate)lysine).

It belongs to the SHMT family. As to quaternary structure, homodimer. Requires pyridoxal 5'-phosphate as cofactor.

The protein localises to the cytoplasm. It catalyses the reaction (6R)-5,10-methylene-5,6,7,8-tetrahydrofolate + glycine + H2O = (6S)-5,6,7,8-tetrahydrofolate + L-serine. Its pathway is one-carbon metabolism; tetrahydrofolate interconversion. The protein operates within amino-acid biosynthesis; glycine biosynthesis; glycine from L-serine: step 1/1. Its function is as follows. Catalyzes the reversible interconversion of serine and glycine with tetrahydrofolate (THF) serving as the one-carbon carrier. This reaction serves as the major source of one-carbon groups required for the biosynthesis of purines, thymidylate, methionine, and other important biomolecules. Also exhibits THF-independent aldolase activity toward beta-hydroxyamino acids, producing glycine and aldehydes, via a retro-aldol mechanism. This Elusimicrobium minutum (strain Pei191) protein is Serine hydroxymethyltransferase.